A 1188-amino-acid chain; its full sequence is uncharacterized protein (1188 aa).

The next 3 membrane-spanning stretches (helical) occupy residues 73-93 (FVVN…HLLM), 878-898 (IFSV…DSGI), and 1089-1109 (VIPL…SEFI).

It is found in the membrane. This is an uncharacterized protein from Saccharomyces cerevisiae (strain ATCC 204508 / S288c) (Baker's yeast).